The sequence spans 124 residues: Magnetosome protein MamC (124 aa).

Residues 2-8 are Cytoplasmic-facing; that stretch reads PFHLAPY. Residues 9–29 traverse the membrane as a helical segment; the sequence is LAKSVPGVGVLGALVGGAAAL. Over 30–64 the chain is Lumenal; it reads AKNVRLLKEKRITNTEAAIDTGKETVGAGLATALS. Positions 36 to 56 are MIC, when fused with the C-terminus of maltose-binding protein (MBP) or expressed as a fragment, improves quality of iron particles during precipitation experiments, binds magnetite; the sequence is LKEKRITNTEAAIDTGKETVG. A helical transmembrane segment spans residues 65–85; sequence AVAATAVGGGLVVSLGTALVA. Over 86–124 the chain is Cytoplasmic; that stretch reads GVAAKYAWDRGVDLVEKELNRGKAANGASDEDILRDELA.

It belongs to the magnetosome MamC family. As to quaternary structure, probably interacts with MamA.

It localises to the magnetosome membrane. Its function is as follows. Probably involved in magnetite crystal growth. The lumenal domain may bind the magnetite crystals, affecting crystal size and shape. This Paramagnetospirillum magneticum (strain ATCC 700264 / AMB-1) (Magnetospirillum magneticum) protein is Magnetosome protein MamC.